We begin with the raw amino-acid sequence, 909 residues long: WD repeat-containing protein 20 homolog (909 aa).

The disordered stretch occupies residues 58 to 132; that stretch reads SPAQGKLGSD…SAGNNTVEAR (75 aa). Composition is skewed to low complexity over residues 80–107 and 115–127; these read GANT…AISN and SHSN…AGNN. WD repeat units lie at residues 248–288, 321–362, 363–402, and 470–517; these read IDKT…AATA, TDNC…GIAR, SYFG…VVAR, and ADRN…LRHP. Disordered regions lie at residues 458–483, 554–628, 661–699, 720–739, and 749–775; these read FEGF…FRSD, SGQA…AGSV, SDSI…NSGS, SEKK…RQHR, and NQHN…GHSS. 2 stretches are compositionally biased toward polar residues: residues 555 to 569 and 595 to 606; these read GQAT…SCSP and TANCTISSQSSP. Low complexity-rich tracts occupy residues 612–628 and 673–699; these read EAAT…AGSV and GQRP…NSGS. One copy of the WD 5 repeat lies at 856–893; sequence IAHERLTALIFREDCFLTACQDGFIYTWARPGHATHAT.

As to quaternary structure, component of the Usp12-46 deubiquitylase complex consisting of Usp12-46, Wdr20 and Uaf1; regulatory subunit that, together with Uaf1, stabilizes Usp12-46. The Usp12-46 deubiquitylase complex associates with arr/arrow; the interaction leads to deubiquitination and stabilization of arr/arrow.

In terms of biological role, regulatory component of the Usp12-46 deubiquitylase complex. This complex deubiquitylates the wg/wingless-signaling receptor arr/arrow, which stabilizes the receptor and increases its concentration at the cell surface; this enhances the sensitivity of cells to wg/wingless-signal stimulation. This increases the amplitude and spatial range of the signaling response to the wg/wingless morphogen gradient, facilitating the precise concentration-dependent regulation of its target genes. Required for wg/wingless-mediated signaling in the wing imaginal disc and for wg/wingless-dependent regulation of intestinal stem cell proliferation. The polypeptide is WD repeat-containing protein 20 homolog (Drosophila melanogaster (Fruit fly)).